The primary structure comprises 492 residues: Homoserine O-acetyltransferase (492 aa).

Residues N47 to E354 form the AB hydrolase-1 domain. Residue S152 is the Nucleophile of the active site. Residue R221 coordinates substrate. Catalysis depends on residues D315 and H348. D349 contributes to the substrate binding site. 2 CBS domains span residues M375–L432 and L436–T492.

The protein belongs to the AB hydrolase superfamily. MetX family. Homodimer.

The protein resides in the cytoplasm. It carries out the reaction L-homoserine + acetyl-CoA = O-acetyl-L-homoserine + CoA. The protein operates within amino-acid biosynthesis; L-methionine biosynthesis via de novo pathway; O-acetyl-L-homoserine from L-homoserine: step 1/1. Its function is as follows. Transfers an acetyl group from acetyl-CoA to L-homoserine, forming acetyl-L-homoserine. The sequence is that of Homoserine O-acetyltransferase from Methanosalsum zhilinae (strain DSM 4017 / NBRC 107636 / OCM 62 / WeN5) (Methanohalophilus zhilinae).